The sequence spans 582 residues: Acylamino-acid-releasing enzyme (582 aa).

Residues S445, D524, and H556 each act as charge relay system in the active site.

The protein belongs to the peptidase S9C family.

It localises to the cytoplasm. The enzyme catalyses Cleavage of an N-acetyl or N-formyl amino acid from the N-terminus of a polypeptide.. Its function is as follows. This enzyme catalyzes the hydrolysis of the N-terminal peptide bond of an N-acetylated peptide to generate an N-acetylated amino acid and a peptide with a free N-terminus. The sequence is that of Acylamino-acid-releasing enzyme from Aeropyrum pernix (strain ATCC 700893 / DSM 11879 / JCM 9820 / NBRC 100138 / K1).